Reading from the N-terminus, the 312-residue chain is Deoxycytidylate deaminase (312 aa).

One can recognise a CMP/dCMP-type deaminase domain in the interval 162 to 291 (SWDSYFMKLA…RMDEESFKVL (130 aa)). His233 serves as a coordination point for Zn(2+). Glu235 functions as the Proton donor in the catalytic mechanism. Cys260 and Cys263 together coordinate Zn(2+).

The protein belongs to the cytidine and deoxycytidylate deaminase family. Zn(2+) is required as a cofactor.

The catalysed reaction is dCMP + H2O + H(+) = dUMP + NH4(+). Its activity is regulated as follows. Allosteric enzyme whose activity is greatly influenced by the end products of its metabolic pathway, dCTP and dTTP. Functionally, catalyzes the hydrolytic deamination of dCMP to yield dUMP, the nucleotide substrate for thymidylate synthetase. The polypeptide is Deoxycytidylate deaminase (Saccharomyces cerevisiae (strain ATCC 204508 / S288c) (Baker's yeast)).